The sequence spans 315 residues: Solute carrier family 25 member 32 (315 aa).

3 Solcar repeats span residues 20–109 (HVRY…IKSY), 118–209 (LEAT…LKLK), and 222–306 (LSTV…VSHF). Transmembrane regions (helical) follow at residues 26–43 (LVAG…LHPL), 89–106 (VWGA…YNAI), 123–143 (YLVS…PLWV), 186–203 (FVPG…FMAY), 227–243 (YISV…AATY), and 281–300 (GIAP…FVVY).

It belongs to the mitochondrial carrier (TC 2.A.29) family.

It localises to the mitochondrion inner membrane. The catalysed reaction is FAD(in) = FAD(out). Facilitates flavin adenine dinucleotide (FAD) translocation across the mitochondrial inner membrane into the mitochondrial matrix where it acts as a redox cofactor to assist flavoenzyme activities in fundamental metabolic processes including fatty acid beta-oxidation, amino acid and choline metabolism as well as mitochondrial electron transportation. In particular, provides FAD to DLD dehydrogenase of the glycine cleavage system, part of mitochondrial one-carbon metabolic pathway involved in neural tube closure in early embryogenesis. The chain is Solute carrier family 25 member 32 from Macaca fascicularis (Crab-eating macaque).